A 524-amino-acid chain; its full sequence is Chromosomal replication initiator protein DnaA (524 aa).

Residues 1 to 72 are domain I, interacts with DnaA modulators; sequence MNDFWQHCSA…DLARDFWNAP (72 aa). Positions 72 to 187 are domain II; the sequence is PIEVQFVLDP…GEADSMYERS (116 aa). The domain III, AAA+ region stretch occupies residues 188–404; the sequence is KLNPVLTFDN…GALRKILAYS (217 aa). The ATP site is built by Gly232, Gly234, Lys235, and Thr236. Residues 405 to 524 form a domain IV, binds dsDNA region; that stretch reads KFHGREISIE…LHVLEQTLKG (120 aa).

This sequence belongs to the DnaA family. In terms of assembly, oligomerizes as a right-handed, spiral filament on DNA at oriC.

It localises to the cytoplasm. Functionally, plays an essential role in the initiation and regulation of chromosomal replication. ATP-DnaA binds to the origin of replication (oriC) to initiate formation of the DNA replication initiation complex once per cell cycle. Binds the DnaA box (a 9 base pair repeat at the origin) and separates the double-stranded (ds)DNA. Forms a right-handed helical filament on oriC DNA; dsDNA binds to the exterior of the filament while single-stranded (ss)DNA is stabiized in the filament's interior. The ATP-DnaA-oriC complex binds and stabilizes one strand of the AT-rich DNA unwinding element (DUE), permitting loading of DNA polymerase. After initiation quickly degrades to an ADP-DnaA complex that is not apt for DNA replication. Binds acidic phospholipids. This chain is Chromosomal replication initiator protein DnaA, found in Burkholderia multivorans (strain ATCC 17616 / 249).